A 341-amino-acid chain; its full sequence is L-threonine 3-dehydrogenase (341 aa).

Zn(2+) is bound at residue Cys-38. Catalysis depends on charge relay system residues Thr-40 and His-43. Zn(2+) is bound by residues His-63, Glu-64, Cys-93, Cys-96, Cys-99, and Cys-107. Residues Ile-175, Asp-195, Arg-200, 262-264, and 286-287 contribute to the NAD(+) site; these read LGI and IY.

The protein belongs to the zinc-containing alcohol dehydrogenase family. Homotetramer. Zn(2+) serves as cofactor.

It localises to the cytoplasm. The catalysed reaction is L-threonine + NAD(+) = (2S)-2-amino-3-oxobutanoate + NADH + H(+). Its pathway is amino-acid degradation; L-threonine degradation via oxydo-reductase pathway; glycine from L-threonine: step 1/2. Its function is as follows. Catalyzes the NAD(+)-dependent oxidation of L-threonine to 2-amino-3-ketobutyrate. The polypeptide is L-threonine 3-dehydrogenase (Shewanella woodyi (strain ATCC 51908 / MS32)).